The sequence spans 145 residues: D-aminoacyl-tRNA deacylase (145 aa).

A Gly-cisPro motif, important for rejection of L-amino acids motif is present at residues 137–138; that stretch reads GP.

It belongs to the DTD family. As to quaternary structure, homodimer.

Its subcellular location is the cytoplasm. It carries out the reaction glycyl-tRNA(Ala) + H2O = tRNA(Ala) + glycine + H(+). It catalyses the reaction a D-aminoacyl-tRNA + H2O = a tRNA + a D-alpha-amino acid + H(+). An aminoacyl-tRNA editing enzyme that deacylates mischarged D-aminoacyl-tRNAs. Also deacylates mischarged glycyl-tRNA(Ala), protecting cells against glycine mischarging by AlaRS. Acts via tRNA-based rather than protein-based catalysis; rejects L-amino acids rather than detecting D-amino acids in the active site. By recycling D-aminoacyl-tRNA to D-amino acids and free tRNA molecules, this enzyme counteracts the toxicity associated with the formation of D-aminoacyl-tRNA entities in vivo and helps enforce protein L-homochirality. In Francisella tularensis subsp. holarctica (strain FTNF002-00 / FTA), this protein is D-aminoacyl-tRNA deacylase.